The sequence spans 289 residues: Pantothenate synthetase (289 aa).

Position 30 to 37 (30 to 37 (MGYLHEGH)) interacts with ATP. Catalysis depends on histidine 37, which acts as the Proton donor. A (R)-pantoate-binding site is contributed by glutamine 61. Glutamine 61 provides a ligand contact to beta-alanine. 147–150 (GLKD) contacts ATP. Glutamine 153 contributes to the (R)-pantoate binding site. ATP is bound by residues valine 176 and 184-187 (KSSR).

This sequence belongs to the pantothenate synthetase family. In terms of assembly, homodimer.

It is found in the cytoplasm. The catalysed reaction is (R)-pantoate + beta-alanine + ATP = (R)-pantothenate + AMP + diphosphate + H(+). It participates in cofactor biosynthesis; (R)-pantothenate biosynthesis; (R)-pantothenate from (R)-pantoate and beta-alanine: step 1/1. Its function is as follows. Catalyzes the condensation of pantoate with beta-alanine in an ATP-dependent reaction via a pantoyl-adenylate intermediate. The protein is Pantothenate synthetase of Geobacillus thermodenitrificans (strain NG80-2).